The chain runs to 463 residues: Mitochondrial dynamics protein MIEF1 (463 aa).

Residues 1–23 lie on the Mitochondrial intermembrane side of the membrane; the sequence is MAGAGERKGKKDDNGIGTAIDFV. A helical transmembrane segment spans residues 24–46; sequence LSNARLVLGVGGAAMLGIATLAV. Over 47 to 463 the chain is Cytoplasmic; it reads KRMYDRAISA…LSEPEVLLQT (417 aa). The interval 49–195 is dimerization; it reads MYDRAISAPT…LSGSLYDDLQ (147 aa). Ser55, Ser59, Ser79, and Ser94 each carry phosphoserine. Positions 57-77 are disordered; that stretch reads PTSPTRLSHSGKRSWEEPNWM. The segment at 96-123 is disordered; sequence QTLPTDSSTFDTDTFCPPRPKPVARKGQ. A compositionally biased stretch (low complexity) spans 100–110; the sequence is TDSSTFDTDTF. The segment at 160 to 169 is important for interaction with DNM1L; that stretch reads AAVDICAELR. ADP is bound by residues Ser187, Ser189, and His201. Residues 234–242 are important for interaction with DNM1L; sequence RRENPEYFP. ADP-binding residues include Ser340, Arg342, and Lys368.

This sequence belongs to the SMCR7 family. In terms of assembly, homodimer. Interacts with DNM1L. Expression is relatively high in heart, skeletal muscle, pancreas and kidney.

Its subcellular location is the mitochondrion outer membrane. Functionally, mitochondrial outer membrane protein which regulates mitochondrial fission/fusion dynamics. Promotes the recruitment and association of the fission mediator dynamin-related protein 1 (DNM1L) to the mitochondrial surface independently of the mitochondrial fission FIS1 and MFF proteins. Regulates DNM1L GTPase activity and DNM1L oligomerization. Binds ADP and can also bind GDP, although with lower affinity. Does not bind CDP, UDP, ATP, AMP or GTP. Inhibits DNM1L GTPase activity in the absence of bound ADP. Requires ADP to stimulate DNM1L GTPase activity and the assembly of DNM1L into long, oligomeric tubules with a spiral pattern, as opposed to the ring-like DNM1L oligomers observed in the absence of bound ADP. Does not require ADP for its function in recruiting DNM1L. In Homo sapiens (Human), this protein is Mitochondrial dynamics protein MIEF1.